Reading from the N-terminus, the 524-residue chain is MNRQFTCKSGAAAKGGFSGCSAVLSGGSSSSYRAGGKGLSGGFGSRSLYSLGGIRNISLNMASGSGKSGYGFGRGRASGFAGSMFGSVALGPVCPTVCPPGGIHQVTVNESLLAPLNVELDPEIQKVRAQEREQIKALNNKFASFIDKVRFLEQQNQVLETKWELLQQLDLNNCKNNLEPILEGYISNLRKQLETLSGDRVRLDSELRSVRDVVEDYKKKYEEEINRRTAAENEFVLLKKDVDAAYANKEELQAKVDSMDQEIKFFKCLYEAEIAQIQSHISDMSVILSMDNNRDLNLDSIIDEVRAQYEEIALKSKAEAEALYQTKFQELQLAAGRHGDDLKNTKNEISELTRLIQRIRSEIENVKKQASNLETAIADAEQRGDSALKDARAKLDELESALHQAKEELARMLREYQELMSLKLALDMEIATYRKLLESEECRMSGEFPSPVSISIISSTSGSSGYGLRPSSVSGGYVANSSSCISGVCSVRGGEGRSRGSTSDYKDTLGKGSSQSASSKKASR.

Residues 1-130 (MNRQFTCKSG…DPEIQKVRAQ (130 aa)) are head. Residues 131–166 (EREQIKALNNKFASFIDKVRFLEQQNQVLETKWELL) are coil 1A. The IF rod domain occupies 131-444 (EREQIKALNN…KLLESEECRM (314 aa)). The tract at residues 167 to 185 (QQLDLNNCKNNLEPILEGY) is linker 1. Positions 186-277 (ISNLRKQLET…CLYEAEIAQI (92 aa)) are coil 1B. The interval 278 to 301 (QSHISDMSVILSMDNNRDLNLDSI) is linker 12. The tract at residues 302–440 (IDEVRAQYEE…ATYRKLLESE (139 aa)) is coil 2. Residues 441–524 (ECRMSGEFPS…QSASSKKASR (84 aa)) are tail. Positions 491–524 (VRGGEGRSRGSTSDYKDTLGKGSSQSASSKKASR) are disordered. The span at 494 to 509 (GEGRSRGSTSDYKDTL) shows a compositional bias: basic and acidic residues. The segment covering 510–524 (GKGSSQSASSKKASR) has biased composition (low complexity).

It belongs to the intermediate filament family. In terms of assembly, heterodimer of a type I and a type II keratin. Associates with KRT16 and/or KRT17.

It localises to the cytoplasm. It is found in the cytoskeleton. Functionally, plays a central role in hair formation. Essential component of keratin intermediate filaments in the inner root sheath (IRS) of the hair follicle. The sequence is that of Keratin, type II cytoskeletal 71 (KRT71) from Felis catus (Cat).